A 359-amino-acid chain; its full sequence is MSALDTAPAGSLAETHAQRGTRAVAFWLWSLAVLVFLMVVLGGATRLTESGLSITEWKPISGALPPLSAEAWQAEFENYKRIPQYAALFPDMDLAGFKFIFFFEWSHRLLGRLIGVATALPLLFFWLRGRLPEGYRLKLLGLLALGGLQGFVGWWMVKSGLSDRVEVAQERLAIHLILASLTFCFIVWLAASLRKRPREISPSKASGLAWGAGLILLAILVQIGLGALVAGLRAGRAYNTWPLIEGNFLPPVESLTLLTPLWRNFVDNLLTVQFQHRMVAYLVLGLTLLQVFWTSGTLGSGRATKRAIALLGLVLAQVILGILTLVLVVPLWAGLLHQAFAMLVLGMAVAHLQALSQGR.

6 helical membrane passes run 23–43 (AVAF…VLGG), 85–105 (YAAL…FFEW), 109–129 (LLGR…WLRG), 137–157 (LKLL…WWMV), 172–192 (LAIH…LAAS), and 212–232 (AGLI…VAGL). Heme is bound at residue H276. 3 helical membrane-spanning segments follow: residues 278–298 (MVAY…SGTL), 308–328 (IALL…LVLV), and 329–349 (VPLW…GMAV). Residue H337 participates in heme binding.

The protein belongs to the COX15/CtaA family. Type 2 subfamily. As to quaternary structure, interacts with CtaB. Requires heme b as cofactor.

The protein resides in the cell membrane. The enzyme catalyses Fe(II)-heme o + 2 A + H2O = Fe(II)-heme a + 2 AH2. Its pathway is porphyrin-containing compound metabolism; heme A biosynthesis; heme A from heme O: step 1/1. Catalyzes the conversion of heme O to heme A by two successive hydroxylations of the methyl group at C8. The first hydroxylation forms heme I, the second hydroxylation results in an unstable dihydroxymethyl group, which spontaneously dehydrates, resulting in the formyl group of heme A. This is Heme A synthase from Beijerinckia indica subsp. indica (strain ATCC 9039 / DSM 1715 / NCIMB 8712).